We begin with the raw amino-acid sequence, 603 residues long: Bud site selection protein 8 (603 aa).

Acidic residues predominate over residues 1 to 10 (MIQSDEDNLD). Disordered regions lie at residues 1 to 25 (MIQSDEDNLDSSETTASTSYSGTSS), 83 to 150 (ASTS…SPSS), and 190 to 212 (ANRGNDESKNGTPPRPTSIEPNE). At 1 to 515 (MIQSDEDNLD…GFRDVYSIEN (515 aa)) the chain is on the extracellular side. Composition is skewed to low complexity over residues 11 to 25 (SSETTASTSYSGTSS) and 84 to 95 (STSSSSSSNSSS). 6 N-linked (GlcNAc...) asparagine glycosylation sites follow: Asn92, Asn110, Asn211, Asn240, Asn271, and Asn333. Over residues 96–115 (ITQFHDTQDNNIPSNTTVRP) the composition is skewed to polar residues. The interval 286–479 (AGSIKSSTSD…NRKEDRHDAE (194 aa)) is disordered. Residues 325-335 (PSHNSDSSNES) show a composition bias toward low complexity. The span at 336–350 (SPKDHIGHNNEEKFS) shows a compositional bias: basic and acidic residues. 2 N-linked (GlcNAc...) asparagine glycosylation sites follow: Asn396 and Asn423. The segment covering 439–452 (KSQSSESDTGQNSI) has biased composition (polar residues). Residues 463–479 (KQQEKTDNRKEDRHDAE) are compositionally biased toward basic and acidic residues. The helical transmembrane segment at 516–536 (IIVILLCCSIVPPLFFIIGCS) threads the bilayer. Topologically, residues 537-577 (SRRKLVSDYRLMRLLMNKEHRAALLQGFIWDVDLRWFRMFC) are cytoplasmic. The helical transmembrane segment at 578 to 598 (LILGAAETVIVMAGIAIGFGV) threads the bilayer. Residues 599–603 (GITRE) are Extracellular-facing.

Belongs to the BUD8/9 family. As to quaternary structure, interacts with RAX1 RAX2 at the proximal or distal pole in unbudded cells. N- and O-glycosylated.

It is found in the cell membrane. Its subcellular location is the bud tip. Functionally, involved in positioning the distal bud pole signal. This chain is Bud site selection protein 8, found in Saccharomyces cerevisiae (strain ATCC 204508 / S288c) (Baker's yeast).